Reading from the N-terminus, the 340-residue chain is Putative cystathionine beta-lyase (340 aa).

Lys208 is modified (N6-(pyridoxal phosphate)lysine).

It belongs to the trans-sulfuration enzymes family. Pyridoxal 5'-phosphate serves as cofactor.

The catalysed reaction is L,L-cystathionine + H2O = L-homocysteine + pyruvate + NH4(+). The enzyme catalyses an S-substituted L-cysteine + H2O = a thiol + pyruvate + NH4(+). It functions in the pathway amino-acid biosynthesis; L-methionine biosynthesis via de novo pathway; L-homocysteine from L-cystathionine: step 1/1. This is Putative cystathionine beta-lyase (IRC7) from Saccharomyces cerevisiae (strain ATCC 204508 / S288c) (Baker's yeast).